Reading from the N-terminus, the 116-residue chain is Small ribosomal subunit protein uS11m (116 aa).

It belongs to the universal ribosomal protein uS11 family.

The protein resides in the mitochondrion. In Chondrus crispus (Carrageen Irish moss), this protein is Small ribosomal subunit protein uS11m (RPS11).